A 643-amino-acid polypeptide reads, in one-letter code: MRFKNVLVLLLLLVFSVINSEPSAPATISDNIYTTLYSSYPCTKIMTSDGQFGCSSKHGGNSGILYLIDDDESYNNYFSYSQQKDIIVVLDTNYFNSTSVLNLHNKSKIEGIIVLTDTKKTYPYSPDSRYPNKIYGLYPNSNLEWNPNADGFTYFSFPFPIFAIDNQTSVAIRNVSKHNRDGQYPAWGAELDSFMQGAINSETCLRRGFCEPVGGQSIWSSFSSKIDKEKEIILVMLPFDTTAFFRDLSIGADQSSFATVTLLSVIKSLAAVDRSSWNKEVVFAFWNAERWGYVGSEYFINDLLNFQCKTYNSDKSKCIDPPRADLAFQTQINFTKISTIIELNQIGRAQLDKNLGKYSLYLHTAGTKTSSVTDILDQVASSYENSTITFKPTTQTELPPSSSMSFLKKTNKIPVVVITDHDYKYSNPYYGYEQDDNENVLGSTLNDIVYILSTFIDRIAGGNNNITIDKNFINILYPCFTSSITCFNILMKTYPLNEVPNFYSSVFGTSLTTTLSPYETKLIHRLLYSITQYNSTLTNCTSDNDCPSSLCYSGQCVSSNTHLHNALSLGFDFDTSKNVWKIVNSSYPIFTESNWDYTALKVFKIGNSTTEIWFLVSGLIELLVSIGLILYVKKFLSNRYKLL.

Positions 1 to 20 (MRFKNVLVLLLLLVFSVINS) are cleaved as a signal peptide. At 21–611 (EPSAPATISD…VFKIGNSTTE (591 aa)) the chain is on the extracellular side. Residues Cys-42 and Cys-54 are joined by a disulfide bond. 2 N-linked (GlcNAc...) asparagine glycosylation sites follow: Asn-96 and Asn-166. 2 disulfide bridges follow: Cys-204-Cys-210 and Cys-308-Cys-318. Residues Asn-333 and Asn-385 are each glycosylated (N-linked (GlcNAc...) asparagine). 3 disulfides stabilise this stretch: Cys-479-Cys-486, Cys-540-Cys-551, and Cys-546-Cys-556. Asn-584 carries an N-linked (GlcNAc...) asparagine glycan. A helical membrane pass occupies residues 612 to 632 (IWFLVSGLIELLVSIGLILYV). Topologically, residues 633–643 (KKFLSNRYKLL) are cytoplasmic.

Belongs to the nicastrin family. In terms of assembly, component of the gamma-secretase complex, a complex composed of a presenilin homodimer, nicastrin, aph1 and pen2.

It localises to the membrane. Essential subunit of the gamma-secretase complex, an endoprotease complex that catalyzes the intramembrane cleavage of integral membrane proteins such as Notch receptors and APP (amyloid-beta precursor protein). The protein is Nicastrin of Dictyostelium purpureum (Slime mold).